We begin with the raw amino-acid sequence, 279 residues long: Thymidylate synthase (279 aa).

R37 serves as a coordination point for dUMP. H67 contributes to the (6R)-5,10-methylene-5,6,7,8-tetrahydrofolate binding site. R142–R143 serves as a coordination point for dUMP. C162 functions as the Nucleophile in the catalytic mechanism. DUMP-binding positions include R182–D185, N193, and H223–Y225. D185 provides a ligand contact to (6R)-5,10-methylene-5,6,7,8-tetrahydrofolate. S278 contributes to the (6R)-5,10-methylene-5,6,7,8-tetrahydrofolate binding site.

It belongs to the thymidylate synthase family. Bacterial-type ThyA subfamily. In terms of assembly, homodimer.

It is found in the cytoplasm. The catalysed reaction is dUMP + (6R)-5,10-methylene-5,6,7,8-tetrahydrofolate = 7,8-dihydrofolate + dTMP. It functions in the pathway pyrimidine metabolism; dTTP biosynthesis. Functionally, catalyzes the reductive methylation of 2'-deoxyuridine-5'-monophosphate (dUMP) to 2'-deoxythymidine-5'-monophosphate (dTMP) while utilizing 5,10-methylenetetrahydrofolate (mTHF) as the methyl donor and reductant in the reaction, yielding dihydrofolate (DHF) as a by-product. This enzymatic reaction provides an intracellular de novo source of dTMP, an essential precursor for DNA biosynthesis. The polypeptide is Thymidylate synthase (Caulobacter vibrioides (strain ATCC 19089 / CIP 103742 / CB 15) (Caulobacter crescentus)).